Reading from the N-terminus, the 409-residue chain is Nucleoprotein (409 aa).

Disordered regions lie at residues 1–32, 44–63, 120–145, and 164–193; these read MASGKTTGKTDAPAPVIKLGGPKPPKVGSSGN, LNSPPPKFEGSGVPDNENLK, GADTKSRSNQGTRDPDKFDQYPLRFS, and RSGRSTAASSAASSRAPSRDGSRGRRSGAE. Low complexity predominate over residues 15-31; the sequence is PVIKLGGPKPPKVGSSG. Residues 29–160 are RNA-binding; it reads SSGNASWFQA…GNFRWDFIPI (132 aa). Residues 31-156 enclose the CoV N NTD domain; that stretch reads GNASWFQALK…GGPDGNFRWD (126 aa). Positions 164-179 are enriched in low complexity; sequence RSGRSTAASSAASSRA. Positions 180–192 are enriched in basic and acidic residues; sequence PSRDGSRGRRSGA. Ser190 carries the post-translational modification Phosphoserine; by host. A CoV N CTD domain is found at 215 to 331; the sequence is TKAKADEMAH…QCVDGVGTRP (117 aa). Positions 226-333 are dimerization; it reads RYCKRTIPPG…VDGVGTRPKD (108 aa). Residues Cys320 and Cys323 are joined by a disulfide bond. A disordered region spans residues 326-409; it reads GVGTRPKDDE…GDSALGENEL (84 aa). Residues 341-355 are compositionally biased toward polar residues; the sequence is RPNSRPATRTSSPAP. Basic residues predominate over residues 358 to 367; that stretch reads QRQKKEKKSK. The span at 368–384 shows a compositional bias: basic and acidic residues; it reads KQDDEVDKALTSDEERN. Thr378 is subject to Phosphothreonine; by host. Ser379 bears the Phosphoserine; by host mark.

The protein belongs to the gammacoronavirus nucleocapsid protein family. As to quaternary structure, homooligomer. Both monomeric and oligomeric forms interact with RNA. Interacts with protein M. Interacts with NSP3; this interaction serves to tether the genome to the newly translated replicase-transcriptase complex at a very early stage of infection. Post-translationally, ADP-ribosylated. The ADP-ribosylation is retained in the virion during infection. In terms of processing, phosphorylated on serine and threonine residues.

It is found in the virion. It localises to the host endoplasmic reticulum-Golgi intermediate compartment. Its subcellular location is the host Golgi apparatus. Its function is as follows. Packages the positive strand viral genome RNA into a helical ribonucleocapsid (RNP) and plays a fundamental role during virion assembly through its interactions with the viral genome and membrane protein M. Plays an important role in enhancing the efficiency of subgenomic viral RNA transcription as well as viral replication. This is Nucleoprotein from Avian infectious bronchitis virus (strain H120) (IBV).